The sequence spans 410 residues: Multifunctional CCA protein (410 aa).

2 residues coordinate ATP: G8 and R11. 2 residues coordinate CTP: G8 and R11. Residues D21 and D23 each contribute to the Mg(2+) site. Residues R91, R137, and R140 each contribute to the ATP site. The CTP site is built by R91, R137, and R140. The HD domain occupies 225-326; that stretch reads SGIHTLMTLQ…LNVLKKTDAF (102 aa).

Belongs to the tRNA nucleotidyltransferase/poly(A) polymerase family. Bacterial CCA-adding enzyme type 1 subfamily. Monomer. Can also form homodimers and oligomers. Mg(2+) is required as a cofactor. Requires Ni(2+) as cofactor.

It catalyses the reaction a tRNA precursor + 2 CTP + ATP = a tRNA with a 3' CCA end + 3 diphosphate. The catalysed reaction is a tRNA with a 3' CCA end + 2 CTP + ATP = a tRNA with a 3' CCACCA end + 3 diphosphate. In terms of biological role, catalyzes the addition and repair of the essential 3'-terminal CCA sequence in tRNAs without using a nucleic acid template. Adds these three nucleotides in the order of C, C, and A to the tRNA nucleotide-73, using CTP and ATP as substrates and producing inorganic pyrophosphate. tRNA 3'-terminal CCA addition is required both for tRNA processing and repair. Also involved in tRNA surveillance by mediating tandem CCA addition to generate a CCACCA at the 3' terminus of unstable tRNAs. While stable tRNAs receive only 3'-terminal CCA, unstable tRNAs are marked with CCACCA and rapidly degraded. This is Multifunctional CCA protein from Neisseria gonorrhoeae (strain ATCC 700825 / FA 1090).